The chain runs to 354 residues: Petrobactin import system permease protein FatC (354 aa).

9 helical membrane passes run 37-57 (YWIVLITLIALGLLSSYGLLV), 77-97 (IVAIVAMIIAAVCHSLSTVAF), 116-136 (LYSAIQTSTVFFFGASALINF), 141-161 (SFLFQVVVMVFMSLILYGWLL), 168-188 (LQLMLLVGIIIGTGLNSVSTF), 214-234 (PAYFPIVIPMIIIVAVLIFAH), 259-279 (VIYTLVLVAILMSISTALIGP), 302-322 (YIFPMAFAIGFLIMTSAYFLM), and 329-349 (QGVVSVIIELFGGIIFLTIVL).

It belongs to the binding-protein-dependent transport system permease family. FecCD subfamily. In terms of assembly, the complex is composed of two ATP-binding proteins (FatE), two transmembrane proteins (FatC and FatD) and a solute-binding protein (FpuA).

It is found in the cell membrane. Its function is as follows. Part of an ABC transporter complex involved in ferric-petrobactin uptake. Probably responsible for the translocation of the substrate across the membrane. The protein is Petrobactin import system permease protein FatC of Bacillus anthracis.